A 394-amino-acid chain; its full sequence is Proliferation-associated protein 2G4 (394 aa).

Position 2 is an N-acetylserine (serine 2). Serine 2 carries the post-translational modification Phosphoserine. The segment at 2–48 (SGEDEQQEQTIAEDLVVTKYKMGGDIANRVLRSLVEASSSGVSVLSL) is necessary for nucleolar localization. The segment at 46-54 (LSLCEKGDA) is RNA-binding. A Glycyl lysine isopeptide (Lys-Gly) (interchain with G-Cter in SUMO2) cross-link involves residue lysine 298. The interval 301 to 394 (LLQPFNVLYE…ETLEENEAGD (94 aa)) is necessary for nucleolar localization. Phosphoserine is present on serine 335. Residues 358 to 394 (LQSSASRKTQKKKKKKASKTAENATSGETLEENEAGD) are disordered. The residue at position 361 (serine 361) is a Phosphoserine; by PKC/PRKCD. The interaction with RNA stretch occupies residues 361–375 (SASRKTQKKKKKKAS). Positions 365 to 375 (KTQKKKKKKAS) are enriched in basic residues. A phosphothreonine mark is found at threonine 366 and threonine 386.

Belongs to the peptidase M24 family. In terms of assembly, isoform 2 interacts with the cytoplasmic domain of non-phosphorylated ERBB3; the interaction requires PKC activity. Interacts with AR. Treatment with HRG leads to dissociation from ERBB3 and increases association with AR. Interacts with NCL/nucleolin. Component of a ribonucleoprotein complex containing at least PA2G4, NCL, TOP1, PABPC2, RPLP0, acetylated histone H1 (HIST1H1A or H1F1), histone H1 2/4, RPL4, RPL8, RPL15, RPL18, RPL18A, RPL21, RPL11, RPL12, RPL28, RPL27, RPLP2 and RPL24. Interacts with HDAC2. Interacts with RB1; the interaction is enhanced upon PA2G4 dephosphorylation. Interacts with AKT1. Isoform 1 and isoform 2 interact with RNF20. Isoform 2 interacts with HUWE1. Interacts with DNAJC21. In terms of processing, phosphorylated on serine and threonine residues. Phosphorylation is enhanced by HRG treatment. Basal phosphorylation is PKC-dependent and HRG-induced phosphorylation is predominantly PKC-independent. Phosphorylation at Ser-361 by PKC/PRKCD regulates its nucleolar localization. In cancer cells, isoform 2 is polyubiquitinated leading to its proteasomal degradation and phosphorylation by PKC/PRKCD enhances polyubiquitination. As to expression, isoform 2 is undetectable whereas isoform 1 is strongly expressed in cancer cells (at protein level). Isoform 1 and isoform 2 are widely expressed, including heart, brain, lung, pancreas, skeletal muscle, kidney, placenta and liver.

The protein resides in the cytoplasm. The protein localises to the nucleus. Its subcellular location is the nucleolus. Its function is as follows. May play a role in a ERBB3-regulated signal transduction pathway. Seems be involved in growth regulation. Acts a corepressor of the androgen receptor (AR) and is regulated by the ERBB3 ligand neuregulin-1/heregulin (HRG). Inhibits transcription of some E2F1-regulated promoters, probably by recruiting histone acetylase (HAT) activity. Binds RNA. Associates with 28S, 18S and 5.8S mature rRNAs, several rRNA precursors and probably U3 small nucleolar RNA. May be involved in regulation of intermediate and late steps of rRNA processing. May be involved in ribosome assembly. Mediates cap-independent translation of specific viral IRESs (internal ribosomal entry site). Regulates cell proliferation, differentiation, and survival. Isoform 1 suppresses apoptosis whereas isoform 2 promotes cell differentiation. The sequence is that of Proliferation-associated protein 2G4 (PA2G4) from Homo sapiens (Human).